Here is a 173-residue protein sequence, read N- to C-terminus: Pathogenesis-related protein 1C (173 aa).

A signal peptide spans M1–A20.

The protein belongs to the thaumatin family.

The chain is Pathogenesis-related protein 1C from Hordeum vulgare (Barley).